The chain runs to 356 residues: Protein RecA (356 aa).

68–75 (GQESSGKT) is a binding site for ATP.

Belongs to the RecA family.

It is found in the cytoplasm. In terms of biological role, can catalyze the hydrolysis of ATP in the presence of single-stranded DNA, the ATP-dependent uptake of single-stranded DNA by duplex DNA, and the ATP-dependent hybridization of homologous single-stranded DNAs. It interacts with LexA causing its activation and leading to its autocatalytic cleavage. This chain is Protein RecA, found in Thermotoga petrophila (strain ATCC BAA-488 / DSM 13995 / JCM 10881 / RKU-1).